Consider the following 453-residue polypeptide: Tryptophan biosynthesis protein TrpCF (453 aa).

The interval 1–257 is indole-3-glycerol phosphate synthase; the sequence is MMQTVLAKIV…AAVRRVLLGE (257 aa). The N-(5'-phosphoribosyl)anthranilate isomerase stretch occupies residues 258–453; sequence NKVCGLTRGQ…ASVFQTLRAY (196 aa).

The protein in the N-terminal section; belongs to the TrpC family. This sequence in the C-terminal section; belongs to the TrpF family. In terms of assembly, monomer.

It catalyses the reaction N-(5-phospho-beta-D-ribosyl)anthranilate = 1-(2-carboxyphenylamino)-1-deoxy-D-ribulose 5-phosphate. The catalysed reaction is 1-(2-carboxyphenylamino)-1-deoxy-D-ribulose 5-phosphate + H(+) = (1S,2R)-1-C-(indol-3-yl)glycerol 3-phosphate + CO2 + H2O. It functions in the pathway amino-acid biosynthesis; L-tryptophan biosynthesis; L-tryptophan from chorismate: step 3/5. The protein operates within amino-acid biosynthesis; L-tryptophan biosynthesis; L-tryptophan from chorismate: step 4/5. Its function is as follows. Bifunctional enzyme that catalyzes two sequential steps of tryptophan biosynthetic pathway. The first reaction is catalyzed by the isomerase, coded by the TrpF domain; the second reaction is catalyzed by the synthase, coded by the TrpC domain. This Escherichia coli O157:H7 protein is Tryptophan biosynthesis protein TrpCF (trpC).